Here is a 323-residue protein sequence, read N- to C-terminus: Methionyl-tRNA formyltransferase (323 aa).

Ser115–Pro118 lines the (6S)-5,6,7,8-tetrahydrofolate pocket.

The protein belongs to the Fmt family.

It catalyses the reaction L-methionyl-tRNA(fMet) + (6R)-10-formyltetrahydrofolate = N-formyl-L-methionyl-tRNA(fMet) + (6S)-5,6,7,8-tetrahydrofolate + H(+). In terms of biological role, attaches a formyl group to the free amino group of methionyl-tRNA(fMet). The formyl group appears to play a dual role in the initiator identity of N-formylmethionyl-tRNA by promoting its recognition by IF2 and preventing the misappropriation of this tRNA by the elongation apparatus. The sequence is that of Methionyl-tRNA formyltransferase from Lactococcus lactis subsp. cremoris (strain MG1363).